Here is a 25-residue protein sequence, read N- to C-terminus: Small ribosomal subunit protein eS32 (25 aa).

A disordered region spans residues 1–25; the sequence is MRAKWRKKRVRRLKRKRRKTRARSK.

This sequence belongs to the eukaryotic ribosomal protein eS32 family. Component of the small ribosomal subunit.

The chain is Small ribosomal subunit protein eS32 (RPL41) from Quercus suber (Cork oak).